Consider the following 231-residue polypeptide: Ribosyldihydronicotinamide dehydrogenase [quinone] (231 aa).

Residues His12 and 18 to 21 contribute to the FAD site; that span reads FNGS. At Ser80 the chain carries Phosphoserine. 104 to 107 serves as a coordination point for FAD; sequence LYWF. Residue 127–129 coordinates substrate; it reads FDI. FAD-binding positions include 148–151 and Tyr156; that span reads TTGG. Zn(2+) is bound by residues His174 and His178. Position 194 (Glu194) interacts with FAD. At Ser197 the chain carries Phosphoserine. Arg201 is an FAD binding site. Cys223 serves as a coordination point for Zn(2+).

The protein belongs to the NAD(P)H dehydrogenase (quinone) family. As to quaternary structure, homodimer. Requires Zn(2+) as cofactor. It depends on FAD as a cofactor.

It is found in the cytoplasm. The catalysed reaction is 1-(beta-D-ribofuranosyl)-1,4-dihydronicotinamide + a quinone + H(+) = beta-nicotinamide D-riboside + a quinol. With respect to regulation, inhibited by melatonin, resveratrol and 5-hydroxytryptamine. In terms of biological role, the enzyme apparently serves as a quinone reductase in connection with conjugation reactions of hydroquinones involved in detoxification pathways as well as in biosynthetic processes such as the vitamin K-dependent gamma-carboxylation of glutamate residues in prothrombin synthesis. The sequence is that of Ribosyldihydronicotinamide dehydrogenase [quinone] (NQO2) from Homo sapiens (Human).